A 231-amino-acid chain; its full sequence is SrfA-induced gene F protein (231 aa).

This Dictyostelium discoideum (Social amoeba) protein is SrfA-induced gene F protein (sigF).